The following is a 406-amino-acid chain: Arginine decarboxylase (406 aa).

Position 8 is an N6-(pyridoxal phosphate)lysine (K8). 192-202 (VDFGGGLGIDY) is a binding site for substrate.

This sequence belongs to the Orn/Lys/Arg decarboxylase class-II family. SpeA subfamily. Pyridoxal 5'-phosphate is required as a cofactor. The cofactor is Mg(2+).

The enzyme catalyses L-arginine + H(+) = agmatine + CO2. It functions in the pathway amine and polyamine biosynthesis; agmatine biosynthesis; agmatine from L-arginine: step 1/1. The chain is Arginine decarboxylase (SPE2) from Theobroma cacao (Cacao).